A 339-amino-acid chain; its full sequence is Dihydroorotate dehydrogenase (quinone) (339 aa).

FMN is bound by residues 64–68 (AGADK) and Thr88. Lys68 contacts substrate. 113–117 (NRNGF) lines the substrate pocket. Residues Asn141 and Asn174 each coordinate FMN. A substrate-binding site is contributed by Asn174. Ser177 (nucleophile) is an active-site residue. Substrate is bound at residue Asn179. Positions 219 and 247 each coordinate FMN. Substrate is bound at residue 248–249 (NT). FMN contacts are provided by residues Gly270, Gly299, and 320–321 (YS).

Belongs to the dihydroorotate dehydrogenase family. Type 2 subfamily. Monomer. It depends on FMN as a cofactor.

Its subcellular location is the cell membrane. The enzyme catalyses (S)-dihydroorotate + a quinone = orotate + a quinol. The protein operates within pyrimidine metabolism; UMP biosynthesis via de novo pathway; orotate from (S)-dihydroorotate (quinone route): step 1/1. Its function is as follows. Catalyzes the conversion of dihydroorotate to orotate with quinone as electron acceptor. The polypeptide is Dihydroorotate dehydrogenase (quinone) (Haemophilus influenzae (strain PittEE)).